A 727-amino-acid chain; its full sequence is Non-structural protein 4 (727 aa).

Disordered regions lie at residues 1 to 38 (MNQS…PSEG) and 671 to 727 (GNSM…KLSK). A compositionally biased stretch (polar residues) spans 17–38 (RTPSALSSNSETPGSMSSPSEG). Residues 712 to 727 (SRRKARKARAASKLSK) show a composition bias toward basic residues.

The chain is Non-structural protein 4 from Rice dwarf virus (isolate Fujian) (RDV).